We begin with the raw amino-acid sequence, 257 residues long: uncharacterized protein (257 aa).

The helical transmembrane segment at 6–26 threads the bilayer; sequence IFWLNLAAIIIISIVVSGGMF.

Belongs to the staphylococcal tandem lipoprotein family.

It localises to the cell membrane. This is an uncharacterized protein from Staphylococcus aureus (strain MSSA476).